Consider the following 169-residue polypeptide: Ubiquitin-fold modifier-conjugating enzyme 1 (169 aa).

The Glycyl thioester intermediate role is filled by Cys116.

The protein belongs to the ubiquitin-conjugating enzyme family. UFC1 subfamily.

In terms of biological role, E2-like enzyme which forms an intermediate with UFM1 via a thioester linkage. This is Ubiquitin-fold modifier-conjugating enzyme 1 from Nematostella vectensis (Starlet sea anemone).